A 360-amino-acid polypeptide reads, in one-letter code: MTTTLQQRSRASVWDRFCEWITSTENRIYIGWFGVLMIPTLLAATACFVIAFIAAPPVDIDGIREPVAGSLIYGNNIISGAVVPSSNAIGLHFYPIWEAASLDEWLYNGGPYQLVIFHFLLGCACYLGRQWELSYRLGMRPWICVAYSAPLASATAVFLIYPIGQGSFSDGMPLGISGTFNFMIVFQAEHNILLHPFHMLGVAGVFGGSLFSAMHGSLVTSSLVRETTETESQNYGYKFGQEEETYNIVAAHGYFGRLIFQYASFNNSRSLHFFLAAWPVVGIWFTALGVSTMAFNLNGFNFNQSVIDSQGRVIATWADVINRANLGMEVMHERNAHNFPLDLAAGEVAPVALTAPAING.

3 helical membrane-spanning segments follow: residues 29 to 46, 118 to 133, and 142 to 156; these read YIGW…AATA, HFLL…QWEL, and WICV…SATA. His118 provides a ligand contact to chlorophyll a. Tyr126 lines the pheophytin a pocket. 2 residues coordinate [CaMn4O5] cluster: Asp170 and Glu189. A helical transmembrane segment spans residues 197 to 218; the sequence is FHMLGVAGVFGGSLFSAMHGSL. Residue His198 participates in chlorophyll a binding. A quinone is bound by residues His215 and 264-265; that span reads SF. Fe cation is bound at residue His215. His272 contacts Fe cation. Residues 274-288 form a helical membrane-spanning segment; the sequence is FLAAWPVVGIWFTAL. 4 residues coordinate [CaMn4O5] cluster: His332, Glu333, Asp342, and Ala344. A propeptide spanning residues 345-360 is cleaved from the precursor; the sequence is AGEVAPVALTAPAING.

The protein belongs to the reaction center PufL/M/PsbA/D family. PSII is composed of 1 copy each of membrane proteins PsbA, PsbB, PsbC, PsbD, PsbE, PsbF, PsbH, PsbI, PsbJ, PsbK, PsbL, PsbM, PsbT, PsbX, PsbY, PsbZ, Psb30/Ycf12, peripheral proteins PsbO, CyanoQ (PsbQ), PsbU, PsbV and a large number of cofactors. It forms dimeric complexes. The cofactor is The D1/D2 heterodimer binds P680, chlorophylls that are the primary electron donor of PSII, and subsequent electron acceptors. It shares a non-heme iron and each subunit binds pheophytin, quinone, additional chlorophylls, carotenoids and lipids. D1 provides most of the ligands for the Mn4-Ca-O5 cluster of the oxygen-evolving complex (OEC). There is also a Cl(-1) ion associated with D1 and D2, which is required for oxygen evolution. The PSII complex binds additional chlorophylls, carotenoids and specific lipids.. Tyr-161 forms a radical intermediate that is referred to as redox-active TyrZ, YZ or Y-Z. In terms of processing, C-terminally processed by CtpA; processing is essential to allow assembly of the oxygen-evolving complex and thus photosynthetic growth.

The protein resides in the cellular thylakoid membrane. It carries out the reaction 2 a plastoquinone + 4 hnu + 2 H2O = 2 a plastoquinol + O2. In terms of biological role, photosystem II (PSII) is a light-driven water:plastoquinone oxidoreductase that uses light energy to abstract electrons from H(2)O, generating O(2) and a proton gradient subsequently used for ATP formation. It consists of a core antenna complex that captures photons, and an electron transfer chain that converts photonic excitation into a charge separation. The D1/D2 (PsbA/PsbD) reaction center heterodimer binds P680, the primary electron donor of PSII as well as several subsequent electron acceptors. The sequence is that of Photosystem II protein D1 from Microchaete diplosiphon (Fremyella diplosiphon).